Here is a 400-residue protein sequence, read N- to C-terminus: Phosphoglycerate kinase (400 aa).

Substrate-binding positions include 19-21 (DLN), arginine 38, 61-64 (HLGR), arginine 124, and arginine 161. ATP contacts are provided by residues lysine 211, glycine 299, glutamate 330, and 356-359 (GGDS).

The protein belongs to the phosphoglycerate kinase family. In terms of assembly, monomer.

It localises to the cytoplasm. The catalysed reaction is (2R)-3-phosphoglycerate + ATP = (2R)-3-phospho-glyceroyl phosphate + ADP. Its pathway is carbohydrate degradation; glycolysis; pyruvate from D-glyceraldehyde 3-phosphate: step 2/5. The polypeptide is Phosphoglycerate kinase (Parafrankia sp. (strain EAN1pec)).